A 385-amino-acid chain; its full sequence is Digeranylgeranylglycerophospholipid reductase 2 (385 aa).

FAD-binding residues include A13, E32, C43, A44, G46, R95, A119, D273, G285, and I286.

It belongs to the geranylgeranyl reductase family. DGGGPL reductase subfamily. Requires FAD as cofactor.

It catalyses the reaction a 2,3-bis-O-phytanyl-sn-glycerol 1-phospholipid + 8 A = a 2,3-bis-O-(geranylgeranyl)-sn-glycerol 1-phospholipid + 8 AH2. The enzyme catalyses 2,3-bis-O-(phytanyl)-sn-glycerol 1-phosphate + 8 A = 2,3-bis-O-(geranylgeranyl)-sn-glycerol 1-phosphate + 8 AH2. It carries out the reaction CDP-2,3-bis-O-(geranylgeranyl)-sn-glycerol + 8 AH2 = CDP-2,3-bis-O-(phytanyl)-sn-glycerol + 8 A. The catalysed reaction is archaetidylserine + 8 AH2 = 2,3-bis-O-phytanyl-sn-glycero-3-phospho-L-serine + 8 A. The protein operates within membrane lipid metabolism; glycerophospholipid metabolism. In terms of biological role, is involved in the reduction of 2,3-digeranylgeranylglycerophospholipids (unsaturated archaeols) into 2,3-diphytanylglycerophospholipids (saturated archaeols) in the biosynthesis of archaeal membrane lipids. Catalyzes the formation of archaetidic acid (2,3-di-O-phytanyl-sn-glyceryl phosphate) from 2,3-di-O-geranylgeranylglyceryl phosphate (DGGGP) via the hydrogenation of each double bond of the isoprenoid chains. Is also probably able to reduce double bonds of geranyl groups in CDP-2,3-bis-O-(geranylgeranyl)-sn-glycerol and archaetidylserine, thus acting at various stages in the biosynthesis of archaeal membrane lipids. The protein is Digeranylgeranylglycerophospholipid reductase 2 of Methanothermobacter thermautotrophicus (strain ATCC 29096 / DSM 1053 / JCM 10044 / NBRC 100330 / Delta H) (Methanobacterium thermoautotrophicum).